The primary structure comprises 476 residues: Sulfate adenylyltransferase subunit 1 (476 aa).

One can recognise a tr-type G domain in the interval 24-240; it reads KSLLRFLTCG…LENVDIDRDK (217 aa). Residues 33–40 form a G1 region; sequence GSVDDGKS. 33–40 contributes to the GTP binding site; it reads GSVDDGKS. The tract at residues 91 to 95 is G2; the sequence is GITID. Positions 112–115 are G3; that stretch reads DTPG. GTP is bound by residues 112–116 and 167–170; these read DTPGH and NKMD. The G4 stretch occupies residues 167–170; sequence NKMD. The segment at 205 to 207 is G5; it reads SAL.

Belongs to the TRAFAC class translation factor GTPase superfamily. Classic translation factor GTPase family. CysN/NodQ subfamily. In terms of assembly, heterodimer composed of CysD, the smaller subunit, and CysN.

The enzyme catalyses sulfate + ATP + H(+) = adenosine 5'-phosphosulfate + diphosphate. It functions in the pathway sulfur metabolism; hydrogen sulfide biosynthesis; sulfite from sulfate: step 1/3. Functionally, with CysD forms the ATP sulfurylase (ATPS) that catalyzes the adenylation of sulfate producing adenosine 5'-phosphosulfate (APS) and diphosphate, the first enzymatic step in sulfur assimilation pathway. APS synthesis involves the formation of a high-energy phosphoric-sulfuric acid anhydride bond driven by GTP hydrolysis by CysN coupled to ATP hydrolysis by CysD. This chain is Sulfate adenylyltransferase subunit 1, found in Vibrio cholerae serotype O1 (strain ATCC 39541 / Classical Ogawa 395 / O395).